The primary structure comprises 352 residues: 4-hydroxy-3-methylbut-2-enyl diphosphate reductase (352 aa).

A [4Fe-4S] cluster-binding site is contributed by Cys-36. His-76 and His-114 together coordinate (2E)-4-hydroxy-3-methylbut-2-enyl diphosphate. Dimethylallyl diphosphate-binding residues include His-76 and His-114. Isopentenyl diphosphate is bound by residues His-76 and His-114. Residue Cys-136 coordinates [4Fe-4S] cluster. His-164 is a (2E)-4-hydroxy-3-methylbut-2-enyl diphosphate binding site. His-164 is a binding site for dimethylallyl diphosphate. Position 164 (His-164) interacts with isopentenyl diphosphate. The active-site Proton donor is Glu-166. (2E)-4-hydroxy-3-methylbut-2-enyl diphosphate is bound at residue Thr-204. Cys-234 lines the [4Fe-4S] cluster pocket. The (2E)-4-hydroxy-3-methylbut-2-enyl diphosphate site is built by Ser-262, Ser-263, Asn-264, and Ser-309. Residues Ser-262, Ser-263, Asn-264, and Ser-309 each contribute to the dimethylallyl diphosphate site. Isopentenyl diphosphate-binding residues include Ser-262, Ser-263, Asn-264, and Ser-309.

It belongs to the IspH family. It depends on [4Fe-4S] cluster as a cofactor.

It carries out the reaction isopentenyl diphosphate + 2 oxidized [2Fe-2S]-[ferredoxin] + H2O = (2E)-4-hydroxy-3-methylbut-2-enyl diphosphate + 2 reduced [2Fe-2S]-[ferredoxin] + 2 H(+). It catalyses the reaction dimethylallyl diphosphate + 2 oxidized [2Fe-2S]-[ferredoxin] + H2O = (2E)-4-hydroxy-3-methylbut-2-enyl diphosphate + 2 reduced [2Fe-2S]-[ferredoxin] + 2 H(+). Its pathway is isoprenoid biosynthesis; dimethylallyl diphosphate biosynthesis; dimethylallyl diphosphate from (2E)-4-hydroxy-3-methylbutenyl diphosphate: step 1/1. The protein operates within isoprenoid biosynthesis; isopentenyl diphosphate biosynthesis via DXP pathway; isopentenyl diphosphate from 1-deoxy-D-xylulose 5-phosphate: step 6/6. Its function is as follows. Catalyzes the conversion of 1-hydroxy-2-methyl-2-(E)-butenyl 4-diphosphate (HMBPP) into a mixture of isopentenyl diphosphate (IPP) and dimethylallyl diphosphate (DMAPP). Acts in the terminal step of the DOXP/MEP pathway for isoprenoid precursor biosynthesis. This is 4-hydroxy-3-methylbut-2-enyl diphosphate reductase from Bifidobacterium longum (strain NCC 2705).